The sequence spans 77 residues: U14-theraphotoxin-Cg1a 3 (77 aa).

Residues 1–21 form the signal peptide; sequence MKTSVLLVILGIAAITVQCTA. A propeptide spanning residues 22–49 is cleaved from the precursor; it reads SESVEQDSLRTFVDTVLGWNAEMASEAR. Disulfide bonds link cysteine 50/cysteine 64, cysteine 57/cysteine 69, and cysteine 63/cysteine 75. Lysine amide is present on lysine 77.

Belongs to the neurotoxin 10 (Hwtx-1) family. 65 (Jztx-21) subfamily. As to expression, expressed by the venom gland.

It localises to the secreted. In terms of biological role, probable ion channel inhibitor. The chain is U14-theraphotoxin-Cg1a 3 from Chilobrachys guangxiensis (Chinese earth tiger tarantula).